A 396-amino-acid polypeptide reads, in one-letter code: Probable sugar efflux transporter (396 aa).

Transmembrane regions (helical) follow at residues 15–35 (VVTL…PVGL), 50–70 (VGIM…PFML), 81–101 (LICL…SWSF), 103–123 (VLVI…SITA), 136–156 (AQAL…GLPL), 170–190 (FFAI…LLPL), 209–229 (PALM…YTAY), 246–266 (FATA…VIFG), 275–295 (ALVS…LPAA), 299–319 (IHLG…GLGM), 333–353 (VAMA…ALVG), and 364–384 (MIGY…IIIF).

The protein belongs to the major facilitator superfamily. SotB (TC 2.A.1.2) family.

It is found in the cell inner membrane. Functionally, involved in the efflux of sugars. The physiological role may be the reduction of the intracellular concentration of toxic sugars or sugar metabolites. The sequence is that of Probable sugar efflux transporter from Escherichia coli O127:H6 (strain E2348/69 / EPEC).